Reading from the N-terminus, the 702-residue chain is Polyribonucleotide nucleotidyltransferase (702 aa).

Mg(2+) is bound by residues Asp485 and Asp491. The KH domain maps to 552–612; it reads PRTEIICIDP…EGVKKAISII (61 aa). The S1 motif domain maps to 622 to 690; it reads GEIYLGKVTK…NQGRINLSRK (69 aa).

It belongs to the polyribonucleotide nucleotidyltransferase family. Requires Mg(2+) as cofactor.

Its subcellular location is the cytoplasm. The catalysed reaction is RNA(n+1) + phosphate = RNA(n) + a ribonucleoside 5'-diphosphate. Functionally, involved in mRNA degradation. Catalyzes the phosphorolysis of single-stranded polyribonucleotides processively in the 3'- to 5'-direction. The sequence is that of Polyribonucleotide nucleotidyltransferase from Clostridium botulinum (strain Langeland / NCTC 10281 / Type F).